Consider the following 593-residue polypeptide: UvrABC system protein C (593 aa).

Residues aspartate 14 to isoleucine 91 form the GIY-YIG domain. The UVR domain occupies asparagine 196–leucine 231.

Belongs to the UvrC family. As to quaternary structure, interacts with UvrB in an incision complex.

It localises to the cytoplasm. Its function is as follows. The UvrABC repair system catalyzes the recognition and processing of DNA lesions. UvrC both incises the 5' and 3' sides of the lesion. The N-terminal half is responsible for the 3' incision and the C-terminal half is responsible for the 5' incision. The polypeptide is UvrABC system protein C (Streptococcus agalactiae serotype III (strain NEM316)).